Here is a 124-residue protein sequence, read N- to C-terminus: NADH dehydrogenase [ubiquinone] iron-sulfur protein 6, mitochondrial (124 aa).

The N-terminal 28 residues, 1–28 (MAAAMTFCRLLNRCGEAARSLPLGARCF), are a transit peptide targeting the mitochondrion. K98 bears the N6-acetyllysine mark.

The protein belongs to the complex I NDUFS6 subunit family. As to quaternary structure, mammalian complex I is composed of 45 different subunits. This is a component of the iron-sulfur (IP) fragment of the enzyme.

Its subcellular location is the mitochondrion inner membrane. In terms of biological role, accessory subunit of the mitochondrial membrane respiratory chain NADH dehydrogenase (Complex I), that is believed not to be involved in catalysis. Complex I functions in the transfer of electrons from NADH to the respiratory chain. The immediate electron acceptor for the enzyme is believed to be ubiquinone. The polypeptide is NADH dehydrogenase [ubiquinone] iron-sulfur protein 6, mitochondrial (NDUFS6) (Homo sapiens (Human)).